The chain runs to 400 residues: MSSKLVLVLNCGSSSLKFAIIDPANGEEYLSGLAECFNLPEARIKWKMDGAKHEAALGAGAAHSEALNFIVNTILAEKPELSDQIAAIGHRIVHGGEKFTASVTINDEVIQGIKDAVPFAPLHNPAHLIGIEEAKKGFPHLADKNVAVFDTAFHQTMPEEAYLYALPYNLYKEHGIRRYGAHGTSHFFVSREAAKTLNKPVEELNVIVCHLGNGGSISAIVNGQCVDTSMGLTPLEGLVMGTRSGDIDPAIIFHLHDSLGMSVEQINKLLTKESGLLGLTEVTSDCRYIEDNYATKADAKRAMDVYCHRLAKYVGAYSALMEGRLDAIIFTGGIGENSALVREQVMKKLALLGFEYDHDRNLAARFGKSGAITTDNSRPALVIPTNEELVIAQDAARLTA.

Position 10 (N10) interacts with Mg(2+). Residue K17 coordinates ATP. R91 is a binding site for substrate. D150 functions as the Proton donor/acceptor in the catalytic mechanism. ATP-binding positions include 210–214, 285–287, and 333–337; these read HLGNG, DCR, and GIGEN. E387 is a binding site for Mg(2+).

The protein belongs to the acetokinase family. As to quaternary structure, homodimer. Mg(2+) serves as cofactor. Requires Mn(2+) as cofactor.

The protein resides in the cytoplasm. It carries out the reaction acetate + ATP = acetyl phosphate + ADP. It participates in metabolic intermediate biosynthesis; acetyl-CoA biosynthesis; acetyl-CoA from acetate: step 1/2. In terms of biological role, catalyzes the formation of acetyl phosphate from acetate and ATP. Can also catalyze the reverse reaction. The chain is Acetate kinase from Photorhabdus laumondii subsp. laumondii (strain DSM 15139 / CIP 105565 / TT01) (Photorhabdus luminescens subsp. laumondii).